Consider the following 238-residue polypeptide: Ribosomal RNA small subunit methyltransferase G (238 aa).

Residues G106, L111, 157-158, and R170 contribute to the S-adenosyl-L-methionine site; that span reads IE.

Belongs to the methyltransferase superfamily. RNA methyltransferase RsmG family.

Its subcellular location is the cytoplasm. The catalysed reaction is guanosine(527) in 16S rRNA + S-adenosyl-L-methionine = N(7)-methylguanosine(527) in 16S rRNA + S-adenosyl-L-homocysteine. Functionally, specifically methylates the N7 position of guanine in position 527 of 16S rRNA. The chain is Ribosomal RNA small subunit methyltransferase G from Psychrobacter cryohalolentis (strain ATCC BAA-1226 / DSM 17306 / VKM B-2378 / K5).